We begin with the raw amino-acid sequence, 308 residues long: Olfactory receptor 4N5 (308 aa).

Residues 1-25 lie on the Extracellular side of the membrane; it reads METQNLTVVTEFILLGLTQSQDAQL. Asn5 carries an N-linked (GlcNAc...) asparagine glycan. A helical membrane pass occupies residues 26 to 49; the sequence is LVFVLVLIFYLIILPGNFLIIFTI. Residues 50–57 are Cytoplasmic-facing; the sequence is KSDPGLTA. A helical transmembrane segment spans residues 58 to 79; that stretch reads PLYFFLGNLALLDASYSFIVVP. The Extracellular portion of the chain corresponds to 80-100; sequence RMLVDFLSEKKVISYRSCITQ. Cys97 and Cys189 are disulfide-bonded. The chain crosses the membrane as a helical span at residues 101-120; it reads LFFLHFLGAGEMFLLVVMAF. At 121–139 the chain is on the cytoplasmic side; the sequence is DRYIAICRPLHYSTIMNPR. A helical transmembrane segment spans residues 140–158; that stretch reads ACYALSLVLWLGGFIHSIV. Over 159–195 the chain is Extracellular; sequence QVALILHLPFCGPNQLDNFFCDVPQVIKLACTNTFVV. The chain crosses the membrane as a helical span at residues 196–219; it reads ELLMVSNSGLLSLLCFLGLLASYA. Residues 220-235 lie on the Cytoplasmic side of the membrane; the sequence is VILCRIREHSSEGKSK. The helical transmembrane segment at 236–258 threads the bilayer; sequence AISTCTTHIIIIFLMFGPAIFIY. Topologically, residues 259 to 269 are extracellular; the sequence is TCPFQAFPADK. A helical transmembrane segment spans residues 270 to 289; sequence VVSLFHTVIFPLMNPVIYTL. The Cytoplasmic segment spans residues 290 to 308; it reads RNQEVKASMRKLLSQHMFC.

This sequence belongs to the G-protein coupled receptor 1 family.

It localises to the cell membrane. Odorant receptor. The polypeptide is Olfactory receptor 4N5 (OR4N5) (Homo sapiens (Human)).